We begin with the raw amino-acid sequence, 351 residues long: Cell shape-determining protein MreB (351 aa).

Residues Thr20–Asn22, Gly169–Thr171, Glu217–Lys220, and Gly299–Leu302 contribute to the ATP site.

Belongs to the FtsA/MreB family. As to quaternary structure, forms polymers.

It localises to the cytoplasm. In terms of biological role, forms membrane-associated dynamic filaments that are essential for cell shape determination. Acts by regulating cell wall synthesis and cell elongation, and thus cell shape. A feedback loop between cell geometry and MreB localization may maintain elongated cell shape by targeting cell wall growth to regions of negative cell wall curvature. The protein is Cell shape-determining protein MreB of Haemophilus influenzae (strain ATCC 51907 / DSM 11121 / KW20 / Rd).